The following is a 194-amino-acid chain: Imidazole glycerol phosphate synthase subunit HisH (194 aa).

The Glutamine amidotransferase type-1 domain maps to 1–194 (MIIIDTGCAN…QLLKNFVENL (194 aa)). Catalysis depends on cysteine 75, which acts as the Nucleophile. Active-site residues include histidine 175 and glutamate 177.

In terms of assembly, heterodimer of HisH and HisF.

The protein resides in the cytoplasm. It carries out the reaction 5-[(5-phospho-1-deoxy-D-ribulos-1-ylimino)methylamino]-1-(5-phospho-beta-D-ribosyl)imidazole-4-carboxamide + L-glutamine = D-erythro-1-(imidazol-4-yl)glycerol 3-phosphate + 5-amino-1-(5-phospho-beta-D-ribosyl)imidazole-4-carboxamide + L-glutamate + H(+). The enzyme catalyses L-glutamine + H2O = L-glutamate + NH4(+). It participates in amino-acid biosynthesis; L-histidine biosynthesis; L-histidine from 5-phospho-alpha-D-ribose 1-diphosphate: step 5/9. In terms of biological role, IGPS catalyzes the conversion of PRFAR and glutamine to IGP, AICAR and glutamate. The HisH subunit catalyzes the hydrolysis of glutamine to glutamate and ammonia as part of the synthesis of IGP and AICAR. The resulting ammonia molecule is channeled to the active site of HisF. The chain is Imidazole glycerol phosphate synthase subunit HisH from Mannheimia succiniciproducens (strain KCTC 0769BP / MBEL55E).